The following is a 161-amino-acid chain: E3 ubiquitin ligase complex SCF subunit sconC (161 aa).

Positions 102–161 are interaction with the F-box domain of F-box proteins; that stretch reads ILAANYLDIKGLLDVGCKTVANMIKGKSPEEIRKTFNIQNDFTPEEEDQIRRENEWAEDR.

Belongs to the SKP1 family. In terms of assembly, component of the SCF (SKP1-CUL1-F-box protein) E3 ubiquitin ligase complexes.

Its pathway is protein modification; protein ubiquitination. Its function is as follows. Essential component of the SCF (SKP1-CUL1-F-box protein) E3 ubiquitin ligase complexes, which mediate the ubiquitination and subsequent proteasomal degradation of target proteins. Controls sulfur metabolite repression, probably by mediating the inactivation or degradation of the metR transcription factor. The polypeptide is E3 ubiquitin ligase complex SCF subunit sconC (sconC) (Aspergillus flavus (strain ATCC 200026 / FGSC A1120 / IAM 13836 / NRRL 3357 / JCM 12722 / SRRC 167)).